The chain runs to 331 residues: Large ribosomal subunit protein uL3 (331 aa).

This sequence belongs to the universal ribosomal protein uL3 family. As to quaternary structure, part of the 50S ribosomal subunit. Forms a cluster with proteins L14 and L24e.

Functionally, one of the primary rRNA binding proteins, it binds directly near the 3'-end of the 23S rRNA, where it nucleates assembly of the 50S subunit. The chain is Large ribosomal subunit protein uL3 from Thermoplasma acidophilum (strain ATCC 25905 / DSM 1728 / JCM 9062 / NBRC 15155 / AMRC-C165).